Reading from the N-terminus, the 260-residue chain is Thymidylate synthase (260 aa).

Arg-21 serves as a coordination point for dUMP. Residue His-51 coordinates (6R)-5,10-methylene-5,6,7,8-tetrahydrofolate. 122 to 123 (RR) serves as a coordination point for dUMP. Cys-142 serves as the catalytic Nucleophile. Residues 162–165 (RSAD), Asn-173, and 203–205 (HLY) each bind dUMP. Asp-165 is a binding site for (6R)-5,10-methylene-5,6,7,8-tetrahydrofolate. Ala-259 contacts (6R)-5,10-methylene-5,6,7,8-tetrahydrofolate.

Belongs to the thymidylate synthase family. Bacterial-type ThyA subfamily. As to quaternary structure, homodimer.

It is found in the cytoplasm. The catalysed reaction is dUMP + (6R)-5,10-methylene-5,6,7,8-tetrahydrofolate = 7,8-dihydrofolate + dTMP. It functions in the pathway pyrimidine metabolism; dTTP biosynthesis. Its function is as follows. Catalyzes the reductive methylation of 2'-deoxyuridine-5'-monophosphate (dUMP) to 2'-deoxythymidine-5'-monophosphate (dTMP) while utilizing 5,10-methylenetetrahydrofolate (mTHF) as the methyl donor and reductant in the reaction, yielding dihydrofolate (DHF) as a by-product. This enzymatic reaction provides an intracellular de novo source of dTMP, an essential precursor for DNA biosynthesis. The protein is Thymidylate synthase of Methylococcus capsulatus (strain ATCC 33009 / NCIMB 11132 / Bath).